Here is a 705-residue protein sequence, read N- to C-terminus: Dolichyl-diphosphooligosaccharide--protein glycosyltransferase subunit STT3A (705 aa).

The Cytoplasmic segment spans residues 1–17 (MTKLGFLRLSYEKQDTL). Residues 18–38 (LKLLILSMAAVLSFSTRLFAV) traverse the membrane as a helical segment. Over 39-119 (LRFESVIHEF…IDIRNVCVFL (81 aa)) the chain is Lumenal. The DXD motif 1 signature appears at 47–49 (EFD). Asp-49 is a Mn(2+) binding site. The chain crosses the membrane as a helical span at residues 120 to 138 (APLFSSFTTIVTYHLTKEL). Residues 139 to 140 (KD) lie on the Cytoplasmic side of the membrane. The helical transmembrane segment at 141-158 (AGAGLLAAAMIAVVPGYI) threads the bilayer. The Lumenal portion of the chain corresponds to 159-169 (SRSVAGSYDNE). Residues Asp-167 and Glu-169 each coordinate Mn(2+). The DXD motif 2 signature appears at 167 to 169 (DNE). Residues 170-189 (GIAIFCMLLTYYMWIKAVKT) traverse the membrane as a helical segment. The Cytoplasmic portion of the chain corresponds to 190 to 191 (GS). A helical membrane pass occupies residues 192–206 (IYWAAKCALAYFYMV). The Lumenal portion of the chain corresponds to 207-211 (SSWGG). Residues 212–228 (YVFLINLIPLHVLVLML) form a helical membrane-spanning segment. Topologically, residues 229–233 (TGRFS) are cytoplasmic. A helical membrane pass occupies residues 234-259 (HRIYVAYCTVYCLGTILSMQISFVGF). Over 260–267 (QPVLSSEH) the chain is Lumenal. A helical transmembrane segment spans residues 268 to 287 (MAAFGVFGLCQIHAFVDYLR). Over 288 to 300 (SKLNPQQFEVLFR) the chain is Cytoplasmic. Residues 301 to 321 (SVISLVGFVLLTIGALLMLTG) form a helical membrane-spanning segment. The Lumenal segment spans residues 322–356 (KISPWTGRFYSLLDPSYAKNNIPIIASVSEHQPTT). Positions 348-351 (SVSE) match the SVSE motif motif. Residues 357 to 379 (WSSYYFDLQLLVFMFPVGLYYCF) traverse the membrane as a helical segment. Residues 380 to 385 (SNLSDA) are Cytoplasmic-facing. A helical membrane pass occupies residues 386-402 (RIFIIMYGVTSMYFSAV). Over 403–406 (MVRL) the chain is Lumenal. Arg-405 contributes to the dolichyl diphosphooligosaccharide binding site. Residues 407-428 (MLVLAPVMCILSGIGVSQVLST) form a helical membrane-spanning segment. Residues 429–453 (YMKNLDISRQDKKSKKQQDSTYPIK) lie on the Cytoplasmic side of the membrane. Residues 454-473 (NEVASGMILVMAFFLITYTF) form a helical membrane-spanning segment. Topologically, residues 474–705 (HSTWVTSEAY…DLDNRGLSRT (232 aa)) are lumenal. The segment at 525–527 (WWD) is interacts with target acceptor peptide in protein substrate. The short motif at 525-529 (WWDYG) is the WWDYG motif element. Tyr-530 contacts dolichyl diphosphooligosaccharide. Residues Asn-537 and Asn-544 are each glycosylated (N-linked (GlcNAc...) asparagine). Asn-548 is a glycosylation site (N-linked (GlcNAc...) (high mannose) asparagine). A DK motif motif is present at residues 592 to 599 (DINKFLWM).

The protein belongs to the STT3 family. Component of the oligosaccharyltransferase (OST) complex. There are 2 OST complexes, OST-A and OST-B, which contain STT3A or STT3B as catalytic subunit, respectively. OST-A and OST-B contain common core subunits RPN1, RPN2, OST48, OST4, DAD1 and TMEM258, and OST-A contains DC2/OSTC and KRTCAP2/KCP2 specific accessory subunits. OST-A complex assembly occurs through the formation of 3 subcomplexes. Subcomplex 1 contains RPN1 and TMEM258, subcomplex 2 contains the OST-A-specific subunits STT3A, DC2/OSTC, and KCP2 as well as the core subunit OST4, and subcomplex 3 contains RPN2, DAD1, and OST48. The OST-A complex can form stable complexes with the Sec61 complex or with both the Sec61 and TRAP complexes. Requires Mg(2+) as cofactor. Mn(2+) serves as cofactor.

Its subcellular location is the endoplasmic reticulum membrane. The enzyme catalyses a di-trans,poly-cis-dolichyl diphosphooligosaccharide + L-asparaginyl-[protein] = N(4)-(oligosaccharide-(1-&gt;4)-N-acetyl-beta-D-glucosaminyl-(1-&gt;4)-N-acetyl-beta-D-glucosaminyl)-L-asparaginyl-[protein] + a di-trans,poly-cis-dolichyl diphosphate + H(+). Its pathway is protein modification; protein glycosylation. Catalytic subunit of the oligosaccharyl transferase (OST) complex that catalyzes the initial transfer of a defined glycan (Glc(3)Man(9)GlcNAc(2) in eukaryotes) from the lipid carrier dolichol-pyrophosphate to an asparagine residue within an Asn-X-Ser/Thr consensus motif in nascent polypeptide chains, the first step in protein N-glycosylation. N-glycosylation occurs cotranslationally and the complex associates with the Sec61 complex at the channel-forming translocon complex that mediates protein translocation across the endoplasmic reticulum (ER). All subunits are required for a maximal enzyme activity. This subunit contains the active site and the acceptor peptide and donor lipid-linked oligosaccharide (LLO) binding pockets. STT3A is present in the majority of OST complexes and mediates cotranslational N-glycosylation of most sites on target proteins, while STT3B-containing complexes are required for efficient post-translational glycosylation and mediate glycosylation of sites that have been skipped by STT3A. STT3A-containing OST-A complex is also required to prevent hyperglycosylation of some target proteins by preventing glycosylation of facultative sites before folding of target proteins is completed. This chain is Dolichyl-diphosphooligosaccharide--protein glycosyltransferase subunit STT3A, found in Bos taurus (Bovine).